Consider the following 237-residue polypeptide: Methylosome subunit pICln (237 aa).

Serine 2 is subject to N-acetylserine. Residues serine 102, serine 144, serine 193, and serine 195 each carry the phosphoserine modification. Threonine 223 carries the post-translational modification Phosphothreonine.

It belongs to the pICln (TC 1.A.47) family. In terms of assembly, component of the methylosome, a 20S complex containing at least PRMT5/SKB1, WDR77/MEP50 and CLNS1A/pICln. May mediate SNRPD1 and SNRPD3 methylation. Forms a 6S pICln-Sm complex composed of CLNS1A/pICln, SNRPD1, SNRPD2, SNRPE, SNRPF and SNRPG; ring-like structure where CLNS1A/pICln mimics additional Sm proteins and which is unable to assemble into the core snRNP. Interacts with LSM10 and LSM11.

It localises to the cytoplasm. The protein resides in the cytosol. Its subcellular location is the nucleus. It is found in the cytoskeleton. Functionally, involved in both the assembly of spliceosomal snRNPs and the methylation of Sm proteins. Chaperone that regulates the assembly of spliceosomal U1, U2, U4 and U5 small nuclear ribonucleoproteins (snRNPs), the building blocks of the spliceosome, and thereby plays an important role in the splicing of cellular pre-mRNAs. Most spliceosomal snRNPs contain a common set of Sm proteins SNRPB, SNRPD1, SNRPD2, SNRPD3, SNRPE, SNRPF and SNRPG that assemble in a heptameric protein ring on the Sm site of the small nuclear RNA to form the core snRNP (Sm core). In the cytosol, the Sm proteins SNRPD1, SNRPD2, SNRPE, SNRPF and SNRPG are trapped in an inactive 6S pICln-Sm complex by the chaperone CLNS1A that controls the assembly of the core snRNP. Dissociation by the SMN complex of CLNS1A from the trapped Sm proteins and their transfer to an SMN-Sm complex triggers the assembly of core snRNPs and their transport to the nucleus. The protein is Methylosome subunit pICln (CLNS1A) of Pongo abelii (Sumatran orangutan).